A 295-amino-acid polypeptide reads, in one-letter code: MSLKHFIQITKPGIIFGNVLSVAGGFFLASKGNIDFGVFLAAVIGTSLVVASGCVFNNCIDRDIDQRMERTRNRVLVQGLVSLKLALLYATILGVAGVALLYTEANPLAALFAVIGFVIYVGLYSLYLKRRSVHGTLVGSLSGAMPPVIGYCAVTNSFDFAALTLLVMFSLWQMPHSYAIAIFRFNDYRAAKIPVLPVKRGILVTKRHIMLYILAFLVATLMLTVGGYAGLNYLAVAAGMGMYWLYMAWKGYKAVDDTVWARKLFVFSIFTITALSVMMSVDFQVTKELLVTYAF.

9 consecutive transmembrane segments (helical) span residues 9–29, 36–56, 80–100, 108–128, 135–155, 163–183, 209–229, 230–250, and 265–285; these read ITKPGIIFGNVLSVAGGFFLA, FGVFLAAVIGTSLVVASGCVF, LVSLKLALLYATILGVAGVAL, LAALFAVIGFVIYVGLYSLYL, GTLVGSLSGAMPPVIGYCAVT, LTLLVMFSLWQMPHSYAIAIF, IMLYILAFLVATLMLTVGGYA, GLNYLAVAAGMGMYWLYMAWK, and FVFSIFTITALSVMMSVDFQV.

This sequence belongs to the UbiA prenyltransferase family. Protoheme IX farnesyltransferase subfamily.

It is found in the cell inner membrane. The enzyme catalyses heme b + (2E,6E)-farnesyl diphosphate + H2O = Fe(II)-heme o + diphosphate. Its pathway is porphyrin-containing compound metabolism; heme O biosynthesis; heme O from protoheme: step 1/1. Converts heme B (protoheme IX) to heme O by substitution of the vinyl group on carbon 2 of heme B porphyrin ring with a hydroxyethyl farnesyl side group. The chain is Protoheme IX farnesyltransferase from Pseudomonas savastanoi pv. phaseolicola (strain 1448A / Race 6) (Pseudomonas syringae pv. phaseolicola (strain 1448A / Race 6)).